The primary structure comprises 246 residues: PF03932 family protein CutC (246 aa).

This sequence belongs to the CutC family.

Its subcellular location is the cytoplasm. This chain is PF03932 family protein CutC, found in Treponema denticola (strain ATCC 35405 / DSM 14222 / CIP 103919 / JCM 8153 / KCTC 15104).